We begin with the raw amino-acid sequence, 206 residues long: Holliday junction branch migration complex subunit RuvA (206 aa).

The interval 1 to 64 (MIGRLSGTIL…EDAQLLYGFN (64 aa)) is domain I. The segment at 65–143 (KKSERELFRE…GWGEGDLFTP (79 aa)) is domain II. A flexible linker region spans residues 144–157 (ASDAAASNAEIQKY). A domain III region spans residues 158-206 (SSARAEDEAVSALIALGYKALQAAKVVSQVVKPEMSSENIIREALRSMV).

It belongs to the RuvA family. In terms of assembly, homotetramer. Forms an RuvA(8)-RuvB(12)-Holliday junction (HJ) complex. HJ DNA is sandwiched between 2 RuvA tetramers; dsDNA enters through RuvA and exits via RuvB. An RuvB hexamer assembles on each DNA strand where it exits the tetramer. Each RuvB hexamer is contacted by two RuvA subunits (via domain III) on 2 adjacent RuvB subunits; this complex drives branch migration. In the full resolvosome a probable DNA-RuvA(4)-RuvB(12)-RuvC(2) complex forms which resolves the HJ.

The protein resides in the cytoplasm. In terms of biological role, the RuvA-RuvB-RuvC complex processes Holliday junction (HJ) DNA during genetic recombination and DNA repair, while the RuvA-RuvB complex plays an important role in the rescue of blocked DNA replication forks via replication fork reversal (RFR). RuvA specifically binds to HJ cruciform DNA, conferring on it an open structure. The RuvB hexamer acts as an ATP-dependent pump, pulling dsDNA into and through the RuvAB complex. HJ branch migration allows RuvC to scan DNA until it finds its consensus sequence, where it cleaves and resolves the cruciform DNA. This chain is Holliday junction branch migration complex subunit RuvA, found in Photobacterium profundum (strain SS9).